Reading from the N-terminus, the 473-residue chain is UDP-N-acetylmuramate--L-alanine ligase (473 aa).

112–118 (GTHGKTT) provides a ligand contact to ATP.

The protein belongs to the MurCDEF family.

The protein localises to the cytoplasm. The enzyme catalyses UDP-N-acetyl-alpha-D-muramate + L-alanine + ATP = UDP-N-acetyl-alpha-D-muramoyl-L-alanine + ADP + phosphate + H(+). The protein operates within cell wall biogenesis; peptidoglycan biosynthesis. Its function is as follows. Cell wall formation. In Nitrosomonas europaea (strain ATCC 19718 / CIP 103999 / KCTC 2705 / NBRC 14298), this protein is UDP-N-acetylmuramate--L-alanine ligase.